A 353-amino-acid polypeptide reads, in one-letter code: Phosphate acyltransferase (353 aa).

Belongs to the PlsX family. Homodimer. Probably interacts with PlsY.

The protein resides in the cytoplasm. It catalyses the reaction a fatty acyl-[ACP] + phosphate = an acyl phosphate + holo-[ACP]. It functions in the pathway lipid metabolism; phospholipid metabolism. Its function is as follows. Catalyzes the reversible formation of acyl-phosphate (acyl-PO(4)) from acyl-[acyl-carrier-protein] (acyl-ACP). This enzyme utilizes acyl-ACP as fatty acyl donor, but not acyl-CoA. The chain is Phosphate acyltransferase from Rhodopseudomonas palustris (strain HaA2).